Reading from the N-terminus, the 264-residue chain is Zinc import ATP-binding protein ZnuC (264 aa).

The 216-residue stretch at 11-226 (IELKGVNVTF…PVFIRFFGNQ (216 aa)) folds into the ABC transporter domain. 43 to 50 (GPNGGGKS) is a binding site for ATP.

This sequence belongs to the ABC transporter superfamily. Zinc importer (TC 3.A.1.15.5) family. The complex is composed of two ATP-binding proteins (ZnuC), two transmembrane proteins (ZnuB) and a solute-binding protein (ZnuA).

It localises to the cell inner membrane. The enzyme catalyses Zn(2+)(out) + ATP(in) + H2O(in) = Zn(2+)(in) + ADP(in) + phosphate(in) + H(+)(in). In terms of biological role, part of the ABC transporter complex ZnuABC involved in zinc import. Responsible for energy coupling to the transport system. In Histophilus somni (strain 129Pt) (Haemophilus somnus), this protein is Zinc import ATP-binding protein ZnuC.